The primary structure comprises 238 residues: Immunoglobulin superfamily member 6 (238 aa).

The signal sequence occupies residues 1 to 27; sequence MGPVSTSRRGLRLGISLILLQVGVVGA. Over 28-153 the chain is Extracellular; the sequence is CTVSVLQPGY…RLFSREVHSL (126 aa). In terms of domain architecture, Ig-like C2-type spans 30–134; sequence VSVLQPGYLE…EPVPTAKQTG (105 aa). Cys-51 and Cys-118 are oxidised to a cystine. Residues 154–174 traverse the membrane as a helical segment; the sequence is LIVLLALLAVYVTGVCVIFIV. Residues 175–238 lie on the Cytoplasmic side of the membrane; sequence LFRSKSNTPR…RKALPSPGRP (64 aa). Positions 215 to 230 are enriched in basic and acidic residues; the sequence is ETSHQPEQDGNYENRK. Positions 215–238 are disordered; the sequence is ETSHQPEQDGNYENRKALPSPGRP.

The protein localises to the membrane. The protein is Immunoglobulin superfamily member 6 (Igsf6) of Rattus norvegicus (Rat).